The primary structure comprises 319 residues: Probable cell division protein WhiA (319 aa).

The segment at residues 277–310 (SLEELGKLAEPAMTKDAIAGRIRRLLCLADKRAK) is a DNA-binding region (H-T-H motif).

It belongs to the WhiA family.

Involved in cell division and chromosome segregation. This chain is Probable cell division protein WhiA, found in Tropheryma whipplei (strain Twist) (Whipple's bacillus).